We begin with the raw amino-acid sequence, 492 residues long: Adenosylhomocysteinase (492 aa).

T68, D153, and E215 together coordinate substrate. 216–218 (TTT) contributes to the NAD(+) binding site. Positions 245 and 249 each coordinate substrate. NAD(+) is bound by residues N250, 279–284 (GYGDVG), E302, N337, 358–360 (IGH), and N406.

The protein belongs to the adenosylhomocysteinase family. The cofactor is NAD(+).

It is found in the cytoplasm. It carries out the reaction S-adenosyl-L-homocysteine + H2O = L-homocysteine + adenosine. It participates in amino-acid biosynthesis; L-homocysteine biosynthesis; L-homocysteine from S-adenosyl-L-homocysteine: step 1/1. In terms of biological role, may play a key role in the regulation of the intracellular concentration of adenosylhomocysteine. This chain is Adenosylhomocysteinase, found in Mycobacterium leprae (strain Br4923).